The following is a 421-amino-acid chain: Gamma-glutamyl phosphate reductase (421 aa).

This sequence belongs to the gamma-glutamyl phosphate reductase family.

Its subcellular location is the cytoplasm. The enzyme catalyses L-glutamate 5-semialdehyde + phosphate + NADP(+) = L-glutamyl 5-phosphate + NADPH + H(+). It participates in amino-acid biosynthesis; L-proline biosynthesis; L-glutamate 5-semialdehyde from L-glutamate: step 2/2. In terms of biological role, catalyzes the NADPH-dependent reduction of L-glutamate 5-phosphate into L-glutamate 5-semialdehyde and phosphate. The product spontaneously undergoes cyclization to form 1-pyrroline-5-carboxylate. This Acinetobacter baumannii (strain ATCC 17978 / DSM 105126 / CIP 53.77 / LMG 1025 / NCDC KC755 / 5377) protein is Gamma-glutamyl phosphate reductase.